We begin with the raw amino-acid sequence, 272 residues long: Tryptophan synthase alpha chain (272 aa).

Active-site proton acceptor residues include E49 and E60.

The protein belongs to the TrpA family. Tetramer of two alpha and two beta chains.

It carries out the reaction (1S,2R)-1-C-(indol-3-yl)glycerol 3-phosphate + L-serine = D-glyceraldehyde 3-phosphate + L-tryptophan + H2O. It functions in the pathway amino-acid biosynthesis; L-tryptophan biosynthesis; L-tryptophan from chorismate: step 5/5. Its function is as follows. The alpha subunit is responsible for the aldol cleavage of indoleglycerol phosphate to indole and glyceraldehyde 3-phosphate. This is Tryptophan synthase alpha chain from Legionella pneumophila (strain Lens).